The chain runs to 404 residues: Acetate kinase (404 aa).

Asparagine 7 is a Mg(2+) binding site. An ATP-binding site is contributed by lysine 14. Substrate is bound at residue arginine 98. Aspartate 155 serves as the catalytic Proton donor/acceptor. ATP contacts are provided by residues 214–218, 289–291, and 337–341; these read HLGNG, DLR, and GIGEN. Glutamate 390 contributes to the Mg(2+) binding site.

This sequence belongs to the acetokinase family. Homodimer. Requires Mg(2+) as cofactor. The cofactor is Mn(2+).

The protein localises to the cytoplasm. It carries out the reaction acetate + ATP = acetyl phosphate + ADP. It functions in the pathway metabolic intermediate biosynthesis; acetyl-CoA biosynthesis; acetyl-CoA from acetate: step 1/2. In terms of biological role, catalyzes the formation of acetyl phosphate from acetate and ATP. Can also catalyze the reverse reaction. The sequence is that of Acetate kinase from Rippkaea orientalis (strain PCC 8801 / RF-1) (Cyanothece sp. (strain PCC 8801)).